Reading from the N-terminus, the 201-residue chain is Dephospho-CoA kinase (201 aa).

The DPCK domain maps to 3-201 (ILGLTGGIGS…QIDSRVGCKI (199 aa)). 11–16 (GSGKSL) contributes to the ATP binding site.

This sequence belongs to the CoaE family.

It is found in the cytoplasm. The enzyme catalyses 3'-dephospho-CoA + ATP = ADP + CoA + H(+). It participates in cofactor biosynthesis; coenzyme A biosynthesis; CoA from (R)-pantothenate: step 5/5. Functionally, catalyzes the phosphorylation of the 3'-hydroxyl group of dephosphocoenzyme A to form coenzyme A. The chain is Dephospho-CoA kinase from Ehrlichia ruminantium (strain Welgevonden).